The primary structure comprises 316 residues: L-lactate dehydrogenase (316 aa).

NAD(+) contacts are provided by residues Val15, Asp37, Lys42, Tyr68, and 82–83 (GL). Substrate-binding positions include Gln85, Arg91, and 123–126 (NPVD). NAD(+) contacts are provided by residues 121-123 (ASN) and Thr146. Substrate is bound at residue 151–154 (DTSR). Residues Arg156 and His171 each contribute to the beta-D-fructose 1,6-bisphosphate site. The active-site Proton acceptor is the His178. Phosphotyrosine is present on Tyr222. A substrate-binding site is contributed by Thr231.

This sequence belongs to the LDH/MDH superfamily. LDH family. Homotetramer.

The protein localises to the cytoplasm. The catalysed reaction is (S)-lactate + NAD(+) = pyruvate + NADH + H(+). The protein operates within fermentation; pyruvate fermentation to lactate; (S)-lactate from pyruvate: step 1/1. Allosterically activated by fructose 1,6-bisphosphate (FBP). Its function is as follows. Catalyzes the conversion of lactate to pyruvate. This chain is L-lactate dehydrogenase, found in Borreliella burgdorferi (strain ATCC 35210 / DSM 4680 / CIP 102532 / B31) (Borrelia burgdorferi).